A 103-amino-acid chain; its full sequence is V-type sodium ATPase subunit G (103 aa).

This sequence belongs to the V-ATPase F subunit family.

Its function is as follows. Involved in ATP-driven sodium extrusion. The polypeptide is V-type sodium ATPase subunit G (ntpG) (Enterococcus hirae (strain ATCC 9790 / DSM 20160 / JCM 8729 / LMG 6399 / NBRC 3181 / NCIMB 6459 / NCDO 1258 / NCTC 12367 / WDCM 00089 / R)).